A 318-amino-acid polypeptide reads, in one-letter code: Oxidoreductase swnN (318 aa).

Belongs to the NmrA-type oxidoreductase family. Isoflavone reductase subfamily.

The protein operates within mycotoxin biosynthesis. Functionally, aminotransferase; part of the gene cluster that mediates the biosynthesis of swainsonine (SW), a cytotoxic fungal alkaloid and a potential cancer therapy drug. Swainsonine production occurs via a multibranched pathway and is dispensable for fungal colonization of plants and infection of insect hosts. The first step of swainsonine biosynthesis is the production of the precursor pipecolic acid (PA) via conversion of L-lysine (Lys) to 1-piperideine-6-carboxylate (P6C) by the aminotransferase swnA, the latter being further reduced to PA by the reductase swnR. The PKS-NRPS hybrid synthetase swnK uptakes and condensates PA and malonyl-CoA with and without skipping of the ketoreductase (KR) domain in order to produce 3 intermediates, 1-oxoindolizidine, (1S)-1-hydroxyindolizin, and (1R)-1-hydroxyindolizine; with the transisomer (1S)-1-hydroxyindolizin being predominant. The terminal thioester reductase (TE) domain of swnK is involved in reduction of the thioester bond to release the intermediate aldehydes. The oxidoreductase swnN could contribute to the reduction of 1-oxoindolizidine to (1S)-1-hydroxyindolizin and (1R)-1-hydroxyindolizine, contributing to the major route of SW production. The dioxygenase swnH2 would be responsible for the oxidization of (1R)-1-hydroxyindolizine into (1R,2S)-1,2-dihydroxyindolizine and of (1S)-1-hydroxyindolizin to yield both (1R,2S)-1,2-dihydroxyindolizine and (1S,2S)-1,2-dihydroxyindolizine. The dioxygenase swnH1 then performs the conversion of the 1,2-dihydroxyindolizine epimers to SW. The polypeptide is Oxidoreductase swnN (Arthroderma benhamiae (strain ATCC MYA-4681 / CBS 112371) (Trichophyton mentagrophytes)).